A 158-amino-acid chain; its full sequence is Low molecular weight phosphotyrosine protein phosphatase (158 aa).

An N-acetylalanine modification is found at Ala-2. The active-site Nucleophile is the Cys-13. Arg-19 is an active-site residue. Asp-130 functions as the Proton donor in the catalytic mechanism. Tyr-132 and Tyr-133 each carry phosphotyrosine.

Belongs to the low molecular weight phosphotyrosine protein phosphatase family.

The protein resides in the cytoplasm. It carries out the reaction O-phospho-L-tyrosyl-[protein] + H2O = L-tyrosyl-[protein] + phosphate. The enzyme catalyses a phosphate monoester + H2O = an alcohol + phosphate. Functionally, acts on tyrosine phosphorylated proteins, low-MW aryl phosphates and natural and synthetic acyl phosphates. This chain is Low molecular weight phosphotyrosine protein phosphatase (ACP1), found in Gallus gallus (Chicken).